A 9439-amino-acid polypeptide reads, in one-letter code: Extracellular matrix-binding protein ebh (9439 aa).

FIVAR domains lie at 1815–1871, 1901–1957, 1985–2041, 2071–2127, 2155–2211, 2241–2297, 2325–2381, 2411–2467, 2488–2551, 2581–2638, 2665–2720, 2748–2804, 2832–2888, 2918–2974, 3002–3058, 3088–3144, 3172–3228, 3258–3314, 3335–3398, 3428–3484, 3512–3567, 3595–3650, 3678–3733, 3802–3860, 3928–3983, 4056–4114, 4182–4240, 4308–4365, 4433–4491, and 4559–4617; these read ARRR…VNSA, AKEQ…INDA, AYDT…VRDA, AKKR…ITSE, AYNK…VTQA, AKNR…ISSE, AYNK…VEDA, AKEK…ITEN, DTTS…VNNA, ARNR…STEI, AKNQ…IRTN, AKTA…VSDE, AYNQ…VNNA, AKEQ…ISNA, AYNQ…VTAA, AKQQ…ITNE, AYNQ…VAQA, AKNQ…ISDE, DTTE…VNNA, ARLN…ITTE, AKTA…IKTN, IKRQ…VKES, AKNR…IRQN, SMTA…IDQK, AMTQ…LDPA, AMQA…VNQK, SMGT…VDNA, AMHT…INQK, VMEQ…IEQA, and SMQT…IDQT. The span at 2495 to 2507 shows a compositional bias: basic and acidic residues; sequence EVRKLSRRGDTNN. The segment at 2495-2514 is disordered; that stretch reads EVRKLSRRGDTNNKKPSSVS. Residues 2925–2938 are compositionally biased toward polar residues; the sequence is AVDQVPSTEGMTQQ. The disordered stretch occupies residues 2925–2951; it reads AVDQVPSTEGMTQQTKDDYNSKQQAAQ. The tract at residues 4649–4674 is disordered; it reads GYLNDPQKSGEESLVNGSNTRSEVEE. 14 FIVAR domains span residues 4685–4743, 4811–4869, 4937–4995, 5063–5115, 5189–5246, 5314–5372, 5440–5498, 5566–5624, 5692–5750, 5818–5875, 5943–6000, 6068–6126, 6194–6252, and 6320–6378; these read AMKQ…IEQK, AMQA…IEQA, AMSN…IEQA, AMEA…VLDK, AMLG…INQL, LMGA…VTTA, AMGE…IDQA, AMKK…ITNA, AMKQ…IADT, DMST…LQDL, AMKA…IKQA, KMEE…INRT, AMQQ…IQAI, and EMGT…IADA. Residues 5699–5712 show a composition bias toward polar residues; the sequence is QVNQDDQISNSSPF. The interval 5699–5719 is disordered; that stretch reads QVNQDDQISNSSPFINEDSDK. The tract at residues 6413-6434 is disordered; the sequence is NNSQRQSEHDEINSAPSRTEVS. 18 FIVAR domains span residues 6446–6504, 6572–6630, 6698–6755, 6823–6877, 6949–7007, 7075–7133, 7201–7259, 7327–7384, 7452–7510, 7578–7636, 7704–7762, 7830–7888, 7956–8010, 8078–8137, 8205–8264, 8332–8391, 8459–8518, and 8587–8643; these read AMRQ…IEDA, AMKA…INRA, SMNQ…IDQA, TMKA…ANDE, AMKK…INTI, SMNT…VERA, DMKK…IENA, AMKH…IKQL, AMEN…IEHA, AMKA…INSI, AMET…VDIV, AMKS…VRQA, VMGK…TKQA, IMGE…IDTF, AMKS…IQGL, AMKD…VLGL, KMKL…IQHL, and AMQG…ANII. A helical membrane pass occupies residues 9306 to 9324; it reads TVGVITLTGLLSSFWLVLA. 3 stretches are compositionally biased toward basic and acidic residues: residues 9363–9375, 9386–9395, and 9404–9413; these read DKEEQIQNDDKHS, EKQLSEEDIH, and QNSDNKDTKQ. Positions 9363 to 9439 are disordered; it reads DKEEQIQNDD…VVKTKKRSKK (77 aa). Residues 9414 to 9439 show a composition bias toward basic residues; that stretch reads KKVTSKKKKTPQSTKKVVKTKKRSKK.

It localises to the cell membrane. The sequence is that of Extracellular matrix-binding protein ebh (ebh) from Staphylococcus epidermidis (strain ATCC 12228 / FDA PCI 1200).